We begin with the raw amino-acid sequence, 62 residues long: Conorfamide-Tx1 (62 aa).

The N-terminal stretch at 1–19 (MSGRGFLLLALLLLVTVEA) is a signal peptide. A propeptide spanning residues 20–26 (TKVEKNK) is cleaved from the precursor. The residue at position 46 (tyrosine 46) is a Tyrosine amide. A propeptide spanning residues 47–62 (GRRDMQSPLLSERLRF) is cleaved from the precursor.

Belongs to the FARP (FMRFamide related peptide) family. As to expression, expressed by the venom duct.

The protein localises to the secreted. This peptide does not show activity on human and mouse sensory neuron-specific G-protein coupled receptors MRGPRX1. In Conus textile (Cloth-of-gold cone), this protein is Conorfamide-Tx1.